We begin with the raw amino-acid sequence, 245 residues long: MASRVNIVQVQILDNPAMFVDKFKMEITFEVFEHLPHDLEWELVYVGSGTSRDFDQVLDSALVGPIPEGRHKFVFDAEHPDISKIPVEDIVGVSVLLLRCKYNDQEFINMGWFVANEYTDEELKENPPAKPLIEKLSRKIETEDLRVTTFPIRWTDEDPVAEPVDEEANKVFDEDDLMPLHDDGQDDDEEEEDDDETGPNTEEVDLNESFNERMANAHDGTEQKNGEESMEHDGASGDVEMGDKH.

Residues 157-166 (EDPVAEPVDE) are compositionally biased toward acidic residues. The segment at 157–245 (EDPVAEPVDE…SGDVEMGDKH (89 aa)) is disordered. Residues 167–183 (EANKVFDEDDLMPLHDD) are compositionally biased toward basic and acidic residues. Residues 184-206 (GQDDDEEEEDDDETGPNTEEVDL) are compositionally biased toward acidic residues. Residues 215 to 245 (ANAHDGTEQKNGEESMEHDGASGDVEMGDKH) are compositionally biased toward basic and acidic residues.

It belongs to the ASF1 family. Interacts with histone H3 and histone H4.

Its subcellular location is the nucleus. Functionally, histone chaperone that facilitates histone deposition and histone exchange and removal during nucleosome assembly and disassembly. This Caenorhabditis elegans protein is Probable histone chaperone asf-1-like protein (asfl-1).